We begin with the raw amino-acid sequence, 362 residues long: Phosphoserine aminotransferase (362 aa).

R43 contributes to the L-glutamate binding site. Residues 77–78 (AR), W103, T153, D173, and Q196 each bind pyridoxal 5'-phosphate. Residue K197 is modified to N6-(pyridoxal phosphate)lysine.

The protein belongs to the class-V pyridoxal-phosphate-dependent aminotransferase family. SerC subfamily. In terms of assembly, homodimer. Pyridoxal 5'-phosphate serves as cofactor.

Its subcellular location is the cytoplasm. It carries out the reaction O-phospho-L-serine + 2-oxoglutarate = 3-phosphooxypyruvate + L-glutamate. It catalyses the reaction 4-(phosphooxy)-L-threonine + 2-oxoglutarate = (R)-3-hydroxy-2-oxo-4-phosphooxybutanoate + L-glutamate. Its pathway is amino-acid biosynthesis; L-serine biosynthesis; L-serine from 3-phospho-D-glycerate: step 2/3. It functions in the pathway cofactor biosynthesis; pyridoxine 5'-phosphate biosynthesis; pyridoxine 5'-phosphate from D-erythrose 4-phosphate: step 3/5. Catalyzes the reversible conversion of 3-phosphohydroxypyruvate to phosphoserine and of 3-hydroxy-2-oxo-4-phosphonooxybutanoate to phosphohydroxythreonine. This Legionella pneumophila (strain Paris) protein is Phosphoserine aminotransferase.